Here is a 421-residue protein sequence, read N- to C-terminus: Serine--tRNA ligase (421 aa).

225–227 serves as a coordination point for L-serine; that stretch reads TAE. ATP contacts are provided by residues 256 to 258 and V272; that span reads RSE. E279 provides a ligand contact to L-serine. 345–348 is an ATP binding site; that stretch reads ETHS. T380 lines the L-serine pocket.

Belongs to the class-II aminoacyl-tRNA synthetase family. Type-1 seryl-tRNA synthetase subfamily. As to quaternary structure, homodimer. A single tRNA molecule binds across the dimer.

The protein resides in the cytoplasm. The catalysed reaction is tRNA(Ser) + L-serine + ATP = L-seryl-tRNA(Ser) + AMP + diphosphate + H(+). It catalyses the reaction tRNA(Sec) + L-serine + ATP = L-seryl-tRNA(Sec) + AMP + diphosphate + H(+). It participates in aminoacyl-tRNA biosynthesis; selenocysteinyl-tRNA(Sec) biosynthesis; L-seryl-tRNA(Sec) from L-serine and tRNA(Sec): step 1/1. In terms of biological role, catalyzes the attachment of serine to tRNA(Ser). Is also probably able to aminoacylate tRNA(Sec) with serine, to form the misacylated tRNA L-seryl-tRNA(Sec), which will be further converted into selenocysteinyl-tRNA(Sec). This is Serine--tRNA ligase (serS) from Thermus thermophilus (strain ATCC BAA-163 / DSM 7039 / HB27).